The following is a 478-amino-acid chain: Bifunctional protein HldE (478 aa).

Residues 1 to 318 are ribokinase; the sequence is MKVTLPDFRQ…ENAIRGRADT (318 aa). 195–198 is an ATP binding site; that stretch reads NLSE. D264 is an active-site residue. A cytidylyltransferase region spans residues 344–478; that stretch reads MTNGCFDILH…NMIKASTSQS (135 aa).

In the N-terminal section; belongs to the carbohydrate kinase PfkB family. This sequence in the C-terminal section; belongs to the cytidylyltransferase family. Homodimer.

The enzyme catalyses D-glycero-beta-D-manno-heptose 7-phosphate + ATP = D-glycero-beta-D-manno-heptose 1,7-bisphosphate + ADP + H(+). It carries out the reaction D-glycero-beta-D-manno-heptose 1-phosphate + ATP + H(+) = ADP-D-glycero-beta-D-manno-heptose + diphosphate. It functions in the pathway nucleotide-sugar biosynthesis; ADP-L-glycero-beta-D-manno-heptose biosynthesis; ADP-L-glycero-beta-D-manno-heptose from D-glycero-beta-D-manno-heptose 7-phosphate: step 1/4. The protein operates within nucleotide-sugar biosynthesis; ADP-L-glycero-beta-D-manno-heptose biosynthesis; ADP-L-glycero-beta-D-manno-heptose from D-glycero-beta-D-manno-heptose 7-phosphate: step 3/4. Its function is as follows. Catalyzes the phosphorylation of D-glycero-D-manno-heptose 7-phosphate at the C-1 position to selectively form D-glycero-beta-D-manno-heptose-1,7-bisphosphate. Functionally, catalyzes the ADP transfer from ATP to D-glycero-beta-D-manno-heptose 1-phosphate, yielding ADP-D-glycero-beta-D-manno-heptose. In Pectobacterium atrosepticum (strain SCRI 1043 / ATCC BAA-672) (Erwinia carotovora subsp. atroseptica), this protein is Bifunctional protein HldE.